A 1076-amino-acid chain; its full sequence is Guanylyl cyclase C (1076 aa).

The signal sequence occupies residues 1-23 (MKSPLLGLVVWSLLLQLLQPGLA). Residues 24–433 (FWNSQISQNC…PHDIPGLGPH (410 aa)) lie on the Extracellular side of the membrane. 9 N-linked (GlcNAc...) asparagine glycosylation sites follow: asparagine 35, asparagine 82, asparagine 191, asparagine 198, asparagine 287, asparagine 306, asparagine 310, asparagine 348, and asparagine 405. Residues 434-457 (ILLIAVCTLAGVVVLILLIALLVL) traverse the membrane as a helical segment. Residues 458-1076 (RKYKKDNELR…NTTDQDSTYF (619 aa)) are Cytoplasmic-facing. The Protein kinase domain occupies 492–752 (LKIDDDKKRD…KIENTLAKIF (261 aa)). Positions 827–957 (TVYFSDIVGF…DTVNTASRME (131 aa)) constitute a Guanylate cyclase domain.

The protein belongs to the adenylyl cyclase class-4/guanylyl cyclase family. As to quaternary structure, homotrimer. Interacts via its C-terminal region with NHERF4. Interacts with the lectin chaperone VIP36. Post-translationally, glycosylation at Asn-62 is required for interaction with VIP36 while glycosylation at Asn-348 and Asn-405 modulates ligand-mediated GC-C activation.

It is found in the cell membrane. It localises to the endoplasmic reticulum membrane. It carries out the reaction GTP = 3',5'-cyclic GMP + diphosphate. In terms of biological role, guanylyl cyclase that catalyzes synthesis of cyclic GMP (cGMP) from GTP. The sequence is that of Guanylyl cyclase C (GUCY2C) from Cavia porcellus (Guinea pig).